Consider the following 562-residue polypeptide: Thermosome subunit alpha (562 aa).

Disordered stretches follow at residues 1–23 (MAQQ…TSGE) and 526–551 (GGQV…GMGG). Residues 537–551 (GPAGGPGGMGGGMGG) are compositionally biased toward gly residues.

Belongs to the TCP-1 chaperonin family. Forms an oligomeric complex of eight-membered rings.

Molecular chaperone; binds unfolded polypeptides in vitro, and has a weak ATPase activity. The chain is Thermosome subunit alpha (thsA) from Halobacterium salinarum (strain ATCC 700922 / JCM 11081 / NRC-1) (Halobacterium halobium).